The chain runs to 180 residues: Colicin-E5 (180 aa).

Disordered stretches follow at residues 24-143 and 155-180; these read AQTD…GSPG and VTQI…KNDQ. Over residues 54–76 the composition is skewed to basic and acidic residues; that stretch reads ESRKKKEDNKRDAEGKLNDELAK. Positions 74–180 are nuclease; sequence LAKNKGKIPG…RIQWGNKNDQ (107 aa). Positions 106 to 116 are enriched in polar residues; the sequence is NTVSNGATGTS. Positions 160-171 are enriched in basic and acidic residues; the sequence is DKTDPGWVDDSR.

This sequence belongs to the colicin/pyosin nuclease family.

Functionally, colicins are polypeptide toxins produced by and active against E.coli and closely related bacteria. This colicin is an endonuclease. The chain is Colicin-E5 (col) from Escherichia coli.